A 284-amino-acid polypeptide reads, in one-letter code: Putative xyloglucan endotransglucosylase/hydrolase protein 13 (284 aa).

An N-terminal signal peptide occupies residues 1-24; it reads MAAFTTKQSLLLLSLLLLISLSAG. The region spanning 25–214 is the GH16 domain; it reads SFYDNFDITW…WTNAPFSASY (190 aa). Catalysis depends on E100, which acts as the Nucleophile. Catalysis depends on E104, which acts as the Proton donor. A xyloglucan-binding site is contributed by E104. N108 carries an N-linked (GlcNAc...) asparagine glycan. Residues 117–119, 127–129, 193–194, and G198 contribute to the xyloglucan site; these read HTN, NRE, and DW. 2 disulfides stabilise this stretch: C223–C234 and C267–C281. R272 is a xyloglucan binding site.

This sequence belongs to the glycosyl hydrolase 16 family. XTH group 2 subfamily. Contains at least one intrachain disulfide bond essential for its enzymatic activity.

Its subcellular location is the secreted. The protein resides in the cell wall. It localises to the extracellular space. It is found in the apoplast. It catalyses the reaction breaks a beta-(1-&gt;4) bond in the backbone of a xyloglucan and transfers the xyloglucanyl segment on to O-4 of the non-reducing terminal glucose residue of an acceptor, which can be a xyloglucan or an oligosaccharide of xyloglucan.. Functionally, may catalyze xyloglucan endohydrolysis (XEH) and/or endotransglycosylation (XET). Cleaves and religates xyloglucan polymers, an essential constituent of the primary cell wall, and thereby participates in cell wall construction of growing tissues. The polypeptide is Putative xyloglucan endotransglucosylase/hydrolase protein 13 (XTH13) (Arabidopsis thaliana (Mouse-ear cress)).